The primary structure comprises 113 residues: uncharacterized protein (113 aa).

This is an uncharacterized protein from Saccharomyces cerevisiae (strain ATCC 204508 / S288c) (Baker's yeast).